Reading from the N-terminus, the 593-residue chain is MKVIEKILEAAGDGRTAFSFEYFPPKTEEGVENLFERMDRMVAHGPSFCDITWGAGGSTADLTLEIANRMQNMVCVETMMHLTCTNMPVEKIDHALETIKSNGIQNVLALRGDPPHGQDKFVQVEGGFACALDLVQHIRAKYGDYFGITVAGYPEAHPDAIQGEGGATLEAYSNDLAYLKRKVDAGADLIVTQLFYDTDIFLKFVNDCRQIGITCPIVPGIMPINNYKGFLRMTGFCKTKIPSEITAALDPIKDNEEAVRQYGIHLGTEMCKKILATGIKTLHLYTLNMDKSAIGILMNLGLIEESKVSRPLPWRPATNVFRVKEDVRPIFWANRPKSYLKRTLGWDQYPHGRWGDSRNPSYGALTDHQFTRPRGRGKKLQEEWAVPLKSVEDISERFTNFCQGKLTSSPWSELDGLQPETKIIDDQLVNINQKGFLTINSQPAVNGEKSDSPTVGWGGPGGYVYQKAYLEFFCAKEKLDQLIEKIKAFPSLTYIAVNKDGETFSNISPNAVNAVTWGVFPGKEIIQPTVVDHASFMVWKDEAFEIWTRGWGCMFPEGDSSRELLEKVQKTYYLVSLVDNDYVQGDLFAAFKI.

Glu-21 acts as the Proton donor/acceptor in catalysis. Residues 21 to 26 and 52 to 53 contribute to the NAD(+) site; these read EYFPPK and TW. FAD-binding positions include 52–53, His-81, 111–113, Tyr-153, 157–160, Asp-175, and Lys-182; these read TW, RGD, and HPDA. Asp-113 is a substrate binding site. Residues Gln-193 and Tyr-285 each contribute to the substrate site.

Belongs to the methylenetetrahydrofolate reductase family. In terms of assembly, homodimer. Requires FAD as cofactor.

The catalysed reaction is (6S)-5-methyl-5,6,7,8-tetrahydrofolate + NAD(+) = (6R)-5,10-methylene-5,6,7,8-tetrahydrofolate + NADH + H(+). It participates in one-carbon metabolism; tetrahydrofolate interconversion. Plant MTHFRs strongly prefer NADH over NADPH. Not inhibited by methionine or S-adenosylmethionine. Its function is as follows. The probable reversibility of the MTHFR reaction in plants suggests that they can metabolize the methyl group of 5,10-methylenetetrahydrofolate to serine, sugars and starch. The chain is Methylenetetrahydrofolate reductase (NADH) 1 from Zea mays (Maize).